The chain runs to 388 residues: Succinate--CoA ligase [ADP-forming] subunit beta (388 aa).

The ATP-grasp domain maps to 9–245 (KELLASYGLP…KSQENERELK (237 aa)). Residues Lys46, 53–55 (GRG), Glu100, Tyr103, and Glu108 contribute to the ATP site. Residues Asn200 and Asp214 each contribute to the Mg(2+) site. Substrate is bound by residues Asn265 and 322–324 (GIV).

It belongs to the succinate/malate CoA ligase beta subunit family. In terms of assembly, heterotetramer of two alpha and two beta subunits. Requires Mg(2+) as cofactor.

It carries out the reaction succinate + ATP + CoA = succinyl-CoA + ADP + phosphate. It catalyses the reaction GTP + succinate + CoA = succinyl-CoA + GDP + phosphate. The protein operates within carbohydrate metabolism; tricarboxylic acid cycle; succinate from succinyl-CoA (ligase route): step 1/1. Succinyl-CoA synthetase functions in the citric acid cycle (TCA), coupling the hydrolysis of succinyl-CoA to the synthesis of either ATP or GTP and thus represents the only step of substrate-level phosphorylation in the TCA. The beta subunit provides nucleotide specificity of the enzyme and binds the substrate succinate, while the binding sites for coenzyme A and phosphate are found in the alpha subunit. The polypeptide is Succinate--CoA ligase [ADP-forming] subunit beta (Neisseria gonorrhoeae (strain ATCC 700825 / FA 1090)).